Reading from the N-terminus, the 523-residue chain is 3-hydroxybenzoate--CoA/4-hydroxybenzoate--CoA ligase (523 aa).

It belongs to the ATP-dependent AMP-binding enzyme family. Benzoate-CoA ligase subfamily.

The enzyme catalyses 4-hydroxybenzoate + ATP + CoA = 4-hydroxybenzoyl-CoA + AMP + diphosphate. The catalysed reaction is 3-hydroxybenzoate + ATP + CoA = 3-hydroxybenzoyl-CoA + AMP + diphosphate. Catalyzes the ligation of 3-hydroxybenzoate or 4-hydroxybenzoate and CoA at the expense of ATP. The enzyme shows low activity towards benzoate, 4-aminobenzoate, 3-aminobenzoate, 3-fluorobenzoate, 4-fluorobenzoate, 3-chlorobenzoate, and 4-chlorobenzoate. There is no activity with 3,4-dihydroxybenzoate, 2,3-dihydroxybenzoate, and 2-hydroxybenzoate as substrates. The sequence is that of 3-hydroxybenzoate--CoA/4-hydroxybenzoate--CoA ligase (hcl) from Thauera aromatica.